The primary structure comprises 487 residues: Malonate-semialdehyde dehydrogenase 3 (487 aa).

Residues Phe154, Lys178, Glu181, Arg182, and Ser231 each coordinate NAD(+). Cys286 functions as the Nucleophile in the catalytic mechanism. Residue Glu386 coordinates NAD(+).

The protein belongs to the aldehyde dehydrogenase family. IolA subfamily. Homotetramer.

It carries out the reaction 3-oxopropanoate + NAD(+) + CoA + H2O = hydrogencarbonate + acetyl-CoA + NADH + H(+). The enzyme catalyses 2-methyl-3-oxopropanoate + NAD(+) + CoA + H2O = propanoyl-CoA + hydrogencarbonate + NADH + H(+). It participates in polyol metabolism; myo-inositol degradation into acetyl-CoA; acetyl-CoA from myo-inositol: step 7/7. In terms of biological role, catalyzes the oxidation of malonate semialdehyde (MSA) and methylmalonate semialdehyde (MMSA) into acetyl-CoA and propanoyl-CoA, respectively. Is involved in a myo-inositol catabolic pathway. Bicarbonate, and not CO2, is the end-product of the enzymatic reaction. The polypeptide is Malonate-semialdehyde dehydrogenase 3 (Bacillus cereus (strain ZK / E33L)).